The following is a 193-amino-acid chain: dCTP deaminase (193 aa).

Residues arginine 110–arginine 115, aspartate 128, valine 136–glutamate 138, tyrosine 171, lysine 178, and glutamine 182 each bind dCTP. Catalysis depends on glutamate 138, which acts as the Proton donor/acceptor. The tract at residues arginine 169–aspartate 193 is disordered.

Belongs to the dCTP deaminase family. In terms of assembly, homotrimer.

It catalyses the reaction dCTP + H2O + H(+) = dUTP + NH4(+). Its pathway is pyrimidine metabolism; dUMP biosynthesis; dUMP from dCTP (dUTP route): step 1/2. In terms of biological role, catalyzes the deamination of dCTP to dUTP. The sequence is that of dCTP deaminase from Salmonella paratyphi B (strain ATCC BAA-1250 / SPB7).